Reading from the N-terminus, the 235-residue chain is Small ribosomal subunit protein uS5 (235 aa).

An S5 DRBM domain is found at 60–123 (ENQEVLDIAL…NYAKMNIIEI (64 aa)). Cysteine 127, cysteine 132, cysteine 134, and histidine 138 together coordinate Zn(2+).

It belongs to the universal ribosomal protein uS5 family. In terms of assembly, part of the 30S ribosomal subunit. Contacts protein S4. The cofactor is Zn(2+).

In terms of biological role, with S4 and S12 plays an important role in translational accuracy. The sequence is that of Small ribosomal subunit protein uS5 from Thermococcus kodakarensis (strain ATCC BAA-918 / JCM 12380 / KOD1) (Pyrococcus kodakaraensis (strain KOD1)).